Consider the following 609-residue polypeptide: N-acetyltransferase ESCO2 (609 aa).

Disordered regions lie at residues 1-71, 100-165, 197-241, and 314-357; these read MLSR…RVSP, EAKS…TDQV, KKPT…SPVR, and PDHD…LTAT. Polar residues-rich tracts occupy residues 13-22 and 41-54; these read AESNPSKKQI and ISLNSPQKIPSTPK. Basic residues predominate over residues 126-135; that stretch reads PAKKVQKKPR. Over residues 214–230 the composition is skewed to basic and acidic residues; it reads PTYEKPSIRKPVREKEL. The span at 345–355 shows a compositional bias: polar residues; sequence PLNSSTPSALT. Residues 392-416 form a CCHH-type zinc finger; it reads TTCASCGMLYSTDSPEDNFQHTQFH.

This sequence belongs to the acetyltransferase family. ECO subfamily.

The protein localises to the nucleus. The protein resides in the chromosome. It catalyses the reaction L-lysyl-[protein] + acetyl-CoA = N(6)-acetyl-L-lysyl-[protein] + CoA + H(+). In terms of biological role, acetyltransferase required for the establishment of sister chromatid cohesion. Couples the processes of cohesion and DNA replication to ensure that only sister chromatids become paired together. Essential for early development. The polypeptide is N-acetyltransferase ESCO2 (esco2) (Danio rerio (Zebrafish)).